The primary structure comprises 200 residues: 7-methyl-GTP pyrophosphatase (200 aa).

The active-site Proton acceptor is the D75.

The protein belongs to the Maf family. YceF subfamily. A divalent metal cation serves as cofactor.

It is found in the cytoplasm. It carries out the reaction N(7)-methyl-GTP + H2O = N(7)-methyl-GMP + diphosphate + H(+). In terms of biological role, nucleoside triphosphate pyrophosphatase that hydrolyzes 7-methyl-GTP (m(7)GTP). May have a dual role in cell division arrest and in preventing the incorporation of modified nucleotides into cellular nucleic acids. The polypeptide is 7-methyl-GTP pyrophosphatase (Hydrogenovibrio crunogenus (strain DSM 25203 / XCL-2) (Thiomicrospira crunogena)).